We begin with the raw amino-acid sequence, 94 residues long: Large ribosomal subunit protein bL25 (94 aa).

This sequence belongs to the bacterial ribosomal protein bL25 family. In terms of assembly, part of the 50S ribosomal subunit; part of the 5S rRNA/L5/L18/L25 subcomplex. Contacts the 5S rRNA. Binds to the 5S rRNA independently of L5 and L18.

Functionally, this is one of the proteins that binds to the 5S RNA in the ribosome where it forms part of the central protuberance. This is Large ribosomal subunit protein bL25 from Escherichia coli (strain K12 / DH10B).